Reading from the N-terminus, the 308-residue chain is 1D-myo-inositol 2-acetamido-2-deoxy-alpha-D-glucopyranoside deacetylase (308 aa).

Positions 13, 16, and 147 each coordinate Zn(2+).

It belongs to the MshB deacetylase family. The cofactor is Zn(2+).

It catalyses the reaction 1D-myo-inositol 2-acetamido-2-deoxy-alpha-D-glucopyranoside + H2O = 1D-myo-inositol 2-amino-2-deoxy-alpha-D-glucopyranoside + acetate. Its function is as follows. Catalyzes the deacetylation of 1D-myo-inositol 2-acetamido-2-deoxy-alpha-D-glucopyranoside (GlcNAc-Ins) in the mycothiol biosynthesis pathway. The polypeptide is 1D-myo-inositol 2-acetamido-2-deoxy-alpha-D-glucopyranoside deacetylase (Mycobacterium leprae (strain Br4923)).